We begin with the raw amino-acid sequence, 469 residues long: NADH-quinone oxidoreductase subunit N (469 aa).

14 consecutive transmembrane segments (helical) span residues 9–29 (PLLM…LIAG), 40–60 (VGVM…VQMV), 76–96 (ATGV…AVAG), 105–125 (EAET…LAGA), 128–148 (LLLL…LVGL), 162–182 (YLMG…LYGL), 201–221 (VAVA…AGGV), 234–254 (ANAT…LVAL), 265–285 (LAWP…GNLA), 294–316 (RLLG…VAGA), 327–347 (YLGG…ALPG), 365–385 (AAAL…AVFI), 402–422 (LAVV…RWII), and 448–468 (VLAA…WQLV).

Belongs to the complex I subunit 2 family. In terms of assembly, NDH-1 is composed of 14 different subunits. Subunits NuoA, H, J, K, L, M, N constitute the membrane sector of the complex.

It localises to the cell membrane. The enzyme catalyses a quinone + NADH + 5 H(+)(in) = a quinol + NAD(+) + 4 H(+)(out). Functionally, NDH-1 shuttles electrons from NADH, via FMN and iron-sulfur (Fe-S) centers, to quinones in the respiratory chain. The immediate electron acceptor for the enzyme in this species is believed to be a menaquinone. Couples the redox reaction to proton translocation (for every two electrons transferred, four hydrogen ions are translocated across the cytoplasmic membrane), and thus conserves the redox energy in a proton gradient. The polypeptide is NADH-quinone oxidoreductase subunit N (Mycobacterium sp. (strain JLS)).